The chain runs to 181 residues: NAD(P)H-quinone oxidoreductase subunit I, chloroplastic (181 aa).

2 4Fe-4S ferredoxin-type domains span residues 55-84 (GRIHFEFDKCIACEVCVRVCPINLPVVDWE) and 95-124 (KNYSIDFAVCIFCGNCVEYCPTNCLSMTEE). C64, C67, C70, C74, C104, C107, C110, and C114 together coordinate [4Fe-4S] cluster.

It belongs to the complex I 23 kDa subunit family. NDH is composed of at least 16 different subunits, 5 of which are encoded in the nucleus. The cofactor is [4Fe-4S] cluster.

Its subcellular location is the plastid. It localises to the chloroplast thylakoid membrane. It catalyses the reaction a plastoquinone + NADH + (n+1) H(+)(in) = a plastoquinol + NAD(+) + n H(+)(out). It carries out the reaction a plastoquinone + NADPH + (n+1) H(+)(in) = a plastoquinol + NADP(+) + n H(+)(out). NDH shuttles electrons from NAD(P)H:plastoquinone, via FMN and iron-sulfur (Fe-S) centers, to quinones in the photosynthetic chain and possibly in a chloroplast respiratory chain. The immediate electron acceptor for the enzyme in this species is believed to be plastoquinone. Couples the redox reaction to proton translocation, and thus conserves the redox energy in a proton gradient. In Angiopteris evecta (Mule's foot fern), this protein is NAD(P)H-quinone oxidoreductase subunit I, chloroplastic.